A 454-amino-acid polypeptide reads, in one-letter code: Trichosetin biosynthesis cluster transcription factor TF22 (454 aa).

A DNA-binding region (zn(2)-C6 fungal-type) is located at residues 13-47; that stretch reads CDRCRSHKLKCTVSPEDSRSGPHKCTRCIRAQVTC. The tract at residues 51–89 is disordered; sequence PRSQSKRTPNGKNKPEKPKPELEPPQKTSPPVCSSSLAG. The segment covering 52–61 has biased composition (polar residues); sequence RSQSKRTPNG. The span at 63–74 shows a compositional bias: basic and acidic residues; that stretch reads NKPEKPKPELEP.

It localises to the nucleus. Transcription factor that regulates the expression of the gene cluster that mediates the biosynthesis of trichosetin, a trans-fused decalin-containing tetramic acid with antimicrobial activity. Directly activates expression of only the three biosynthetic genes PKS-NRPS1, DA and ER, while TF23 and MFS-T are induced by the final product trichosetin and not by TF22. This chain is Trichosetin biosynthesis cluster transcription factor TF22, found in Gibberella fujikuroi (strain CBS 195.34 / IMI 58289 / NRRL A-6831) (Bakanae and foot rot disease fungus).